The primary structure comprises 49 residues: Venom peptide 3 (49 aa).

The signal sequence occupies residues 1–23 (MRFTFVLVIAATVAVLGFFGINA). AXPX repeat units lie at residues 23–26 (AEPM) and 31–34 (AEPY). The propeptide occupies 24-37 (EPMPDPHAEPYPDA). A Leucine amide modification is found at leucine 48.

As to expression, expressed by the venom gland.

The protein localises to the secreted. This chain is Venom peptide 3, found in Eumenes pomiformis (Potter wasp).